Here is a 511-residue protein sequence, read N- to C-terminus: Cytochrome P450 71A6 (511 aa).

2 helical membrane-spanning segments follow: residues 1 to 15 (ILIALLCTLPFLFFL) and 61 to 77 (VMQLHFGSVPVLVASSP). N-linked (GlcNAc...) asparagine glycosylation is found at asparagine 90, asparagine 96, and asparagine 167. Residue cysteine 450 participates in heme binding.

This sequence belongs to the cytochrome P450 family. Requires heme as cofactor.

It is found in the membrane. The chain is Cytochrome P450 71A6 (CYP71A6) from Nepeta racemosa (Catmint).